The sequence spans 521 residues: GMP synthase [glutamine-hydrolyzing] (521 aa).

The Glutamine amidotransferase type-1 domain maps to 5-197 (KILILDFGSQ…VLDICGAQPG (193 aa)). The active-site Nucleophile is the C81. Residues H171 and E173 contribute to the active site. Positions 198 to 390 (WTMPNYIEEA…LGLPREMVYR (193 aa)) constitute a GMPS ATP-PPase domain. 225–231 (SGGVDSS) is an ATP binding site.

In terms of assembly, homodimer.

The enzyme catalyses XMP + L-glutamine + ATP + H2O = GMP + L-glutamate + AMP + diphosphate + 2 H(+). It participates in purine metabolism; GMP biosynthesis; GMP from XMP (L-Gln route): step 1/1. Catalyzes the synthesis of GMP from XMP. This Neisseria meningitidis serogroup B (strain ATCC BAA-335 / MC58) protein is GMP synthase [glutamine-hydrolyzing] (guaA).